The sequence spans 485 residues: Delta(14)-sterol reductase (485 aa).

5 helical membrane passes run 18–38, 77–97, 131–151, 155–175, and 319–339; these read FFGPPGAFAISFLLPVLVYVF, GLVSWEASAATAGYILLSLIL, LAILAAGTAAQGAEFPVWTFI, FIQILTANTIFSYAVATFVYV, and SLGPVGLAVMLSLIGLGFYIF. NADP(+)-binding positions include Lys346, Arg350, Leu373, Trp378, and 385–386; that span reads NY. A helical membrane pass occupies residues 431–451; the sequence is AKGWGMLITYFYILYFAILLI. NADP(+) contacts are provided by residues Asp457, 461–465, and Tyr472; that span reads CHRKY.

The protein belongs to the ERG4/ERG24 family.

The protein localises to the membrane. It carries out the reaction 4,4-dimethyl-5alpha-cholesta-8,24-dien-3beta-ol + NADP(+) = 4,4-dimethyl-5alpha-cholesta-8,14,24-trien-3beta-ol + NADPH + H(+). It participates in steroid biosynthesis; zymosterol biosynthesis; zymosterol from lanosterol: step 2/6. Reduces the C14=C15 double bond of 4,4-dimethyl-cholesta-8,14,24-trienol to produce 4,4-dimethyl-cholesta-8,24-dienol. This is Delta(14)-sterol reductase from Fusarium vanettenii (Neocosmospora pisi).